Consider the following 356-residue polypeptide: 4-hydroxy-3-methylbut-2-en-1-yl diphosphate synthase (flavodoxin) (356 aa).

Cys264, Cys267, Cys299, and Glu306 together coordinate [4Fe-4S] cluster.

It belongs to the IspG family. Requires [4Fe-4S] cluster as cofactor.

It carries out the reaction (2E)-4-hydroxy-3-methylbut-2-enyl diphosphate + oxidized [flavodoxin] + H2O + 2 H(+) = 2-C-methyl-D-erythritol 2,4-cyclic diphosphate + reduced [flavodoxin]. Its pathway is isoprenoid biosynthesis; isopentenyl diphosphate biosynthesis via DXP pathway; isopentenyl diphosphate from 1-deoxy-D-xylulose 5-phosphate: step 5/6. Converts 2C-methyl-D-erythritol 2,4-cyclodiphosphate (ME-2,4cPP) into 1-hydroxy-2-methyl-2-(E)-butenyl 4-diphosphate. This chain is 4-hydroxy-3-methylbut-2-en-1-yl diphosphate synthase (flavodoxin), found in Campylobacter lari (strain RM2100 / D67 / ATCC BAA-1060).